We begin with the raw amino-acid sequence, 94 residues long: MSRSLTKGPFIADHLLKKIQKLNAQGKKKVIVTWSRASTIVPLMIGHTIAVHNGREHIPVFITDQMVGHKLGEFSPTRTYRGHIKTKGDKKSKR.

Belongs to the universal ribosomal protein uS19 family.

It localises to the plastid. The protein resides in the chloroplast. Its function is as follows. Protein S19 forms a complex with S13 that binds strongly to the 16S ribosomal RNA. The protein is Small ribosomal subunit protein uS19c of Pleurastrum terricola (Filamentous green alga).